A 382-amino-acid polypeptide reads, in one-letter code: Mannitol-1-phosphate 5-dehydrogenase (382 aa).

Residue 3 to 14 (ALHFGAGNIGRG) participates in NAD(+) binding. K269 carries the post-translational modification N6-acetyllysine.

It belongs to the mannitol dehydrogenase family. Monomer.

The enzyme catalyses D-mannitol 1-phosphate + NAD(+) = beta-D-fructose 6-phosphate + NADH + H(+). This Escherichia coli O157:H7 protein is Mannitol-1-phosphate 5-dehydrogenase.